The primary structure comprises 328 residues: UPF0421 protein SSP0904 (328 aa).

4 helical membrane passes run 26 to 46 (LFCL…IVTI), 61 to 81 (LPAT…FGDQ), 84 to 104 (FAYA…NLHV), and 132 to 152 (LLTA…ILPP).

This sequence belongs to the UPF0421 family.

The protein localises to the cell membrane. The sequence is that of UPF0421 protein SSP0904 from Staphylococcus saprophyticus subsp. saprophyticus (strain ATCC 15305 / DSM 20229 / NCIMB 8711 / NCTC 7292 / S-41).